The primary structure comprises 227 residues: LysM and putative peptidoglycan-binding domain-containing protein 1 (227 aa).

Ser23 and Ser33 each carry phosphoserine. The LysM domain occupies 40-84 (LEHQLEPGDTLAGLALKYGVTMEQIKRTNRLYTNDSIFLKKTLYI). A disordered region spans residues 95–157 (NGLDSEEEEN…PSHDLSASDF (63 aa)). A compositionally biased stretch (acidic residues) spans 98 to 108 (DSEEEENDGEE). Ser99 is subject to Phosphoserine. The segment covering 143-152 (QGTSTPSHDL) has biased composition (polar residues). 4 positions are modified to phosphoserine: Ser166, Ser181, Ser194, and Ser212. The tract at residues 169 to 227 (KKAAAQKLRKGESGVPEEDTGLYPSSPRMQQRAVLGPVPLTRTSRTQTLRDQEDEIFKL) is disordered. The segment covering 216–227 (TLRDQEDEIFKL) has biased composition (basic and acidic residues).

The chain is LysM and putative peptidoglycan-binding domain-containing protein 1 (Lysmd1) from Rattus norvegicus (Rat).